Here is a 154-residue protein sequence, read N- to C-terminus: 6,7-dimethyl-8-ribityllumazine synthase (154 aa).

5-amino-6-(D-ribitylamino)uracil-binding positions include Phe22, 56 to 58 (SFE), and 80 to 82 (AVI). 85–86 (ST) contributes to the (2S)-2-hydroxy-3-oxobutyl phosphate binding site. His88 acts as the Proton donor in catalysis. Tyr113 lines the 5-amino-6-(D-ribitylamino)uracil pocket. Arg127 contacts (2S)-2-hydroxy-3-oxobutyl phosphate.

Belongs to the DMRL synthase family. Forms an icosahedral capsid composed of 60 subunits, arranged as a dodecamer of pentamers.

It catalyses the reaction (2S)-2-hydroxy-3-oxobutyl phosphate + 5-amino-6-(D-ribitylamino)uracil = 6,7-dimethyl-8-(1-D-ribityl)lumazine + phosphate + 2 H2O + H(+). It participates in cofactor biosynthesis; riboflavin biosynthesis; riboflavin from 2-hydroxy-3-oxobutyl phosphate and 5-amino-6-(D-ribitylamino)uracil: step 1/2. In terms of biological role, catalyzes the formation of 6,7-dimethyl-8-ribityllumazine by condensation of 5-amino-6-(D-ribitylamino)uracil with 3,4-dihydroxy-2-butanone 4-phosphate. This is the penultimate step in the biosynthesis of riboflavin. This is 6,7-dimethyl-8-ribityllumazine synthase from Sulfurihydrogenibium sp. (strain YO3AOP1).